The following is a 510-amino-acid chain: Chorion transcription factor Cf2 (510 aa).

Residues 1–10 (MIKSTTNPQE) are compositionally biased toward polar residues. The tract at residues 1–40 (MIKSTTNPQEQRLPRPEDQSPAPPPPPPSSATTSTAAPAT) is disordered. Positions 30–40 (SATTSTAAPAT) are enriched in low complexity. C2H2-type zinc fingers lie at residues 74 to 97 (HYCP…QLCH) and 125 to 148 (HPCF…RLAH). A compositionally biased stretch (basic and acidic residues) spans 222–237 (PEEQHHQQQLQAEHHH). The tract at residues 222–279 (PEEQHHQQQLQAEHHHQQQHQQQQQQQQQQQELLEQQQREMQEQAQQQQVHHHQQDQD) is disordered. Residues 240–257 (QHQQQQQQQQQQQELLEQ) are compositionally biased toward low complexity. 5 consecutive C2H2-type zinc fingers follow at residues 366–388 (HKCP…RKIH), 401–423 (YTCS…TRIH), 429–451 (FRCG…LTTH), 457–479 (FHCG…IRTH), and 485–508 (YTCP…TKLH).

Isoform I is found in embryos, pupae and adult somatic tissue; isoform II occurs in embryos, pupae, ovaries, testis and to a lesser extent in adult somatic tissue.

The protein resides in the nucleus. Functionally, transcriptional regulator; binds to the promoter region of Cp15. Also binds to its own promoter, thus having a probable autoregulatory role. This Drosophila melanogaster (Fruit fly) protein is Chorion transcription factor Cf2 (Cf2).